The primary structure comprises 612 residues: Dihydroxy-acid dehydratase (612 aa).

A Mg(2+)-binding site is contributed by Asp81. Cys122 contributes to the [2Fe-2S] cluster binding site. The Mg(2+) site is built by Asp123 and Lys124. Position 124 is an N6-carboxylysine (Lys124). Cys196 provides a ligand contact to [2Fe-2S] cluster. Position 492 (Glu492) interacts with Mg(2+). The Proton acceptor role is filled by Ser518.

The protein belongs to the IlvD/Edd family. As to quaternary structure, homodimer. It depends on [2Fe-2S] cluster as a cofactor. Mg(2+) serves as cofactor.

It catalyses the reaction (2R)-2,3-dihydroxy-3-methylbutanoate = 3-methyl-2-oxobutanoate + H2O. The catalysed reaction is (2R,3R)-2,3-dihydroxy-3-methylpentanoate = (S)-3-methyl-2-oxopentanoate + H2O. It functions in the pathway amino-acid biosynthesis; L-isoleucine biosynthesis; L-isoleucine from 2-oxobutanoate: step 3/4. Its pathway is amino-acid biosynthesis; L-valine biosynthesis; L-valine from pyruvate: step 3/4. Functions in the biosynthesis of branched-chain amino acids. Catalyzes the dehydration of (2R,3R)-2,3-dihydroxy-3-methylpentanoate (2,3-dihydroxy-3-methylvalerate) into 2-oxo-3-methylpentanoate (2-oxo-3-methylvalerate) and of (2R)-2,3-dihydroxy-3-methylbutanoate (2,3-dihydroxyisovalerate) into 2-oxo-3-methylbutanoate (2-oxoisovalerate), the penultimate precursor to L-isoleucine and L-valine, respectively. The chain is Dihydroxy-acid dehydratase from Cereibacter sphaeroides (strain ATCC 17029 / ATH 2.4.9) (Rhodobacter sphaeroides).